We begin with the raw amino-acid sequence, 265 residues long: Probable ribose-5-phosphate isomerase 2 (265 aa).

At Ala2 the chain carries N-acetylalanine. A Phosphoserine modification is found at Ser96.

It belongs to the ribose 5-phosphate isomerase family.

The protein localises to the cytoplasm. The catalysed reaction is aldehydo-D-ribose 5-phosphate = D-ribulose 5-phosphate. The protein operates within carbohydrate degradation; pentose phosphate pathway; D-ribose 5-phosphate from D-ribulose 5-phosphate (non-oxidative stage): step 1/1. Catalyzes the reversible conversion of ribose-5-phosphate to ribulose 5-phosphate. In Arabidopsis thaliana (Mouse-ear cress), this protein is Probable ribose-5-phosphate isomerase 2 (RPI2).